A 124-amino-acid chain; its full sequence is Aspartate 1-decarboxylase (124 aa).

S25 (schiff-base intermediate with substrate; via pyruvic acid) is an active-site residue. Position 25 is a pyruvic acid (Ser) (S25). T57 contributes to the substrate binding site. The active-site Proton donor is the Y58. 73 to 75 (GAA) is a binding site for substrate.

The protein belongs to the PanD family. In terms of assembly, heterooctamer of four alpha and four beta subunits. The cofactor is pyruvate. Post-translationally, is synthesized initially as an inactive proenzyme, which is activated by self-cleavage at a specific serine bond to produce a beta-subunit with a hydroxyl group at its C-terminus and an alpha-subunit with a pyruvoyl group at its N-terminus.

Its subcellular location is the cytoplasm. It catalyses the reaction L-aspartate + H(+) = beta-alanine + CO2. The protein operates within cofactor biosynthesis; (R)-pantothenate biosynthesis; beta-alanine from L-aspartate: step 1/1. Catalyzes the pyruvoyl-dependent decarboxylation of aspartate to produce beta-alanine. The polypeptide is Aspartate 1-decarboxylase (Clostridium beijerinckii (strain ATCC 51743 / NCIMB 8052) (Clostridium acetobutylicum)).